We begin with the raw amino-acid sequence, 292 residues long: Formamidopyrimidine-DNA glycosylase (292 aa).

P2 functions as the Schiff-base intermediate with DNA in the catalytic mechanism. The active-site Proton donor is E3. K58 serves as the catalytic Proton donor; for beta-elimination activity. DNA contacts are provided by H98, R128, and R173. Residues 258 to 292 (LVYDRAGQPCRVCATPVRQIVQGQRSTFYCPNCQH) form an FPG-type zinc finger. R282 functions as the Proton donor; for delta-elimination activity in the catalytic mechanism.

This sequence belongs to the FPG family. In terms of assembly, monomer. It depends on Zn(2+) as a cofactor.

The catalysed reaction is Hydrolysis of DNA containing ring-opened 7-methylguanine residues, releasing 2,6-diamino-4-hydroxy-5-(N-methyl)formamidopyrimidine.. The enzyme catalyses 2'-deoxyribonucleotide-(2'-deoxyribose 5'-phosphate)-2'-deoxyribonucleotide-DNA = a 3'-end 2'-deoxyribonucleotide-(2,3-dehydro-2,3-deoxyribose 5'-phosphate)-DNA + a 5'-end 5'-phospho-2'-deoxyribonucleoside-DNA + H(+). Its function is as follows. Involved in base excision repair of DNA damaged by oxidation or by mutagenic agents. Acts as a DNA glycosylase that recognizes and removes damaged bases. Has a preference for oxidized purines, such as 7,8-dihydro-8-oxoguanine (8-oxoG). Has AP (apurinic/apyrimidinic) lyase activity and introduces nicks in the DNA strand. Cleaves the DNA backbone by beta-delta elimination to generate a single-strand break at the site of the removed base with both 3'- and 5'-phosphates. In Cupriavidus necator (strain ATCC 17699 / DSM 428 / KCTC 22496 / NCIMB 10442 / H16 / Stanier 337) (Ralstonia eutropha), this protein is Formamidopyrimidine-DNA glycosylase.